A 244-amino-acid chain; its full sequence is MKHQDVAIIIPSRLSSTRLTRKPLQLIGSSTLIERVFKQVNQTNLEHIYVATDSQEIASVIEKLGGKVIFTDSNIPTGTDRTYEAFKLIPNNQNINYIVNVQGDMPFIEPESILKVIEDLKNSKYDIVTPVVKVEKDSVEAASNVTVAIDSKGKAIYFSRSLIPNGAEEFLYHVGMYGFRKSALERFVALEPTFLEKTERLEQLRLLENGMTIGTCLVNNVPISVDTPEDLSKAVKFYEKSKLV.

The protein belongs to the KdsB family.

The protein localises to the cytoplasm. The enzyme catalyses 3-deoxy-alpha-D-manno-oct-2-ulosonate + CTP = CMP-3-deoxy-beta-D-manno-octulosonate + diphosphate. The protein operates within nucleotide-sugar biosynthesis; CMP-3-deoxy-D-manno-octulosonate biosynthesis; CMP-3-deoxy-D-manno-octulosonate from 3-deoxy-D-manno-octulosonate and CTP: step 1/1. It functions in the pathway bacterial outer membrane biogenesis; lipopolysaccharide biosynthesis. In terms of biological role, activates KDO (a required 8-carbon sugar) for incorporation into bacterial lipopolysaccharide in Gram-negative bacteria. The protein is 3-deoxy-manno-octulosonate cytidylyltransferase of Rickettsia bellii (strain OSU 85-389).